Reading from the N-terminus, the 283-residue chain is uncharacterized protein (283 aa).

Residues M1–S21 form a disordered region. A helical membrane pass occupies residues S41–L61.

The protein belongs to the APS1/VSP family.

The protein localises to the membrane. This is an uncharacterized protein from Arabidopsis thaliana (Mouse-ear cress).